Consider the following 442-residue polypeptide: D-serine dehydratase (442 aa).

Position 118 is an N6-(pyridoxal phosphate)lysine (Lys118).

It belongs to the serine/threonine dehydratase family. DsdA subfamily. As to quaternary structure, monomer. The cofactor is pyridoxal 5'-phosphate.

It catalyses the reaction D-serine = pyruvate + NH4(+). The protein is D-serine dehydratase of Shigella flexneri serotype 5b (strain 8401).